The following is a 149-amino-acid chain: Cytochrome c-type biogenesis protein CcmE (149 aa).

The Cytoplasmic segment spans residues 1-7 (MKARHKR). Residues 8-28 (LGLIVAGLAALGLGAALVLSA) traverse the membrane as a helical; Signal-anchor for type II membrane protein segment. Topologically, residues 29-149 (FQKNLVFFFT…GAPALAGALK (121 aa)) are periplasmic. Positions 123 and 127 each coordinate heme.

The protein belongs to the CcmE/CycJ family.

The protein resides in the cell inner membrane. Heme chaperone required for the biogenesis of c-type cytochromes. Transiently binds heme delivered by CcmC and transfers the heme to apo-cytochromes in a process facilitated by CcmF and CcmH. The chain is Cytochrome c-type biogenesis protein CcmE from Polaromonas naphthalenivorans (strain CJ2).